Here is a 341-residue protein sequence, read N- to C-terminus: MVSSQAKYELIQEVGRGSYGVVYEAVVRQTGARVAVEKIRCHSPENVELALREFWALSSIQSQHPNVIHLEECVLQRDALAQRMSHGSSSSLYLELVETSLKGEITFDPCCAYYMWFVMDFCDGGDMNAYLLSRKPSRKTNTSFMLQLGSALAFLHRNQIIHRDLKPDNILISQGRTPAGSPEPTLKVADFGLSKVCSGSGLNPEEPASVNKCFLSTACGTDFYMAPEVWEGHYTAKADIFALGVIIWAMVERITFVDVETQKELLGSYVQQGEDIVPLGEALLENPKMELNIPARKKSMNASMKQLIREMLSANPQERPDAFELELRLVRIACRELDWDT.

The region spanning 8-332 is the Protein kinase domain; sequence YELIQEVGRG…FELELRLVRI (325 aa). 14 to 22 contributes to the ATP binding site; it reads VGRGSYGVV. The Proton acceptor role is filled by aspartate 164.

This sequence belongs to the protein kinase superfamily. Ser/Thr protein kinase family.

It is found in the nucleus. It carries out the reaction L-seryl-[protein] + ATP = O-phospho-L-seryl-[protein] + ADP + H(+). It catalyses the reaction L-threonyl-[protein] + ATP = O-phospho-L-threonyl-[protein] + ADP + H(+). This Danio rerio (Zebrafish) protein is Serine/threonine-protein kinase pdik1l (pdik1l).